A 157-amino-acid polypeptide reads, in one-letter code: SsrA-binding protein (157 aa).

This sequence belongs to the SmpB family.

It is found in the cytoplasm. Its function is as follows. Required for rescue of stalled ribosomes mediated by trans-translation. Binds to transfer-messenger RNA (tmRNA), required for stable association of tmRNA with ribosomes. tmRNA and SmpB together mimic tRNA shape, replacing the anticodon stem-loop with SmpB. tmRNA is encoded by the ssrA gene; the 2 termini fold to resemble tRNA(Ala) and it encodes a 'tag peptide', a short internal open reading frame. During trans-translation Ala-aminoacylated tmRNA acts like a tRNA, entering the A-site of stalled ribosomes, displacing the stalled mRNA. The ribosome then switches to translate the ORF on the tmRNA; the nascent peptide is terminated with the 'tag peptide' encoded by the tmRNA and targeted for degradation. The ribosome is freed to recommence translation, which seems to be the essential function of trans-translation. This Limosilactobacillus fermentum (strain NBRC 3956 / LMG 18251) (Lactobacillus fermentum) protein is SsrA-binding protein.